We begin with the raw amino-acid sequence, 243 residues long: Segregation and condensation protein A (243 aa).

This sequence belongs to the ScpA family. Component of a cohesin-like complex composed of ScpA, ScpB and the Smc homodimer, in which ScpA and ScpB bind to the head domain of Smc. The presence of the three proteins is required for the association of the complex with DNA.

It is found in the cytoplasm. In terms of biological role, participates in chromosomal partition during cell division. May act via the formation of a condensin-like complex containing Smc and ScpB that pull DNA away from mid-cell into both cell halves. This is Segregation and condensation protein A from Halothermothrix orenii (strain H 168 / OCM 544 / DSM 9562).